Here is a 555-residue protein sequence, read N- to C-terminus: Potassium-transporting ATPase potassium-binding subunit (555 aa).

The next 10 helical transmembrane spans lie at 2-22 (IWVA…PTGV), 60-80 (QYAL…YFIF), 130-150 (IGIT…VMAF), 173-193 (VFLP…VPQT), 246-266 (MSNI…PFTY), 278-298 (ILFV…TTSE), 374-394 (AGFV…GLMV), 412-432 (LIAV…ALAL), 483-503 (LVMF…AASL), and 525-545 (GIFI…MLVL).

The protein belongs to the KdpA family. In terms of assembly, the system is composed of three essential subunits: KdpA, KdpB and KdpC.

It localises to the cell membrane. In terms of biological role, part of the high-affinity ATP-driven potassium transport (or Kdp) system, which catalyzes the hydrolysis of ATP coupled with the electrogenic transport of potassium into the cytoplasm. This subunit binds the extracellular potassium ions and delivers the ions to the membrane domain of KdpB through an intramembrane tunnel. This Bacillus cereus (strain B4264) protein is Potassium-transporting ATPase potassium-binding subunit.